A 576-amino-acid chain; its full sequence is uncharacterized protein (576 aa).

Composition is skewed to polar residues over residues 1-21 and 28-40; these read MSTN…QSAS and HTTS…TYQL. Positions 1–40 are disordered; that stretch reads MSTNPNAGIQPLTNSISQSASAHPELYHTTSHESVSTYQL. Helical transmembrane passes span 149–169, 173–193, 200–220, 231–251, 261–281, 291–311, 366–386, 401–421, 446–466, 472–492, 503–525, and 542–562; these read FASS…HISL, LLTM…WAPL, KLPL…VAVA, FFSG…FADM, ITIF…IGGF, WTEY…YLFC, PIVF…YLLL, MGVA…GSAI, LPPM…LSWS, VHWI…LLIF, YLFR…AAGF, and GSLL…FFFF.

The protein belongs to the major facilitator superfamily. CAR1 family.

Its subcellular location is the endoplasmic reticulum. The protein resides in the golgi apparatus. It is found in the membrane. This is an uncharacterized protein from Schizosaccharomyces pombe (strain 972 / ATCC 24843) (Fission yeast).